The following is a 93-amino-acid chain: UPF0728 protein C10orf53 (93 aa).

It belongs to the UPF0728 family.

In Homo sapiens (Human), this protein is UPF0728 protein C10orf53 (C10orf53).